The chain runs to 322 residues: Ferrochelatase (322 aa).

Fe cation contacts are provided by His-194 and Glu-275.

It belongs to the ferrochelatase family.

It is found in the cytoplasm. The catalysed reaction is heme b + 2 H(+) = protoporphyrin IX + Fe(2+). The protein operates within porphyrin-containing compound metabolism; protoheme biosynthesis; protoheme from protoporphyrin-IX: step 1/1. Functionally, catalyzes the ferrous insertion into protoporphyrin IX. This chain is Ferrochelatase, found in Yersinia enterocolitica serotype O:8 / biotype 1B (strain NCTC 13174 / 8081).